We begin with the raw amino-acid sequence, 548 residues long: Tylosin resistance ATP-binding protein TlrC (548 aa).

ABC transporter domains follow at residues 9 to 265 (LSLH…RRRQ) and 347 to 547 (IATA…VSGA). ATP contacts are provided by residues 41 to 48 (GDNGAGKS) and 387 to 394 (GPNGAGKS).

This sequence belongs to the ABC transporter superfamily.

The protein resides in the cell membrane. Functionally, responsible for tylosin resistance, and is proposed to be a subunit of a multicomponent export system for the energy-dependent efflux of tylosin. The polypeptide is Tylosin resistance ATP-binding protein TlrC (tlrC) (Streptomyces fradiae (Streptomyces roseoflavus)).